The sequence spans 353 residues: Phosphate acyltransferase (353 aa).

The protein belongs to the PlsX family. Homodimer. Probably interacts with PlsY.

It localises to the cytoplasm. It carries out the reaction a fatty acyl-[ACP] + phosphate = an acyl phosphate + holo-[ACP]. It functions in the pathway lipid metabolism; phospholipid metabolism. Functionally, catalyzes the reversible formation of acyl-phosphate (acyl-PO(4)) from acyl-[acyl-carrier-protein] (acyl-ACP). This enzyme utilizes acyl-ACP as fatty acyl donor, but not acyl-CoA. The sequence is that of Phosphate acyltransferase from Afipia carboxidovorans (strain ATCC 49405 / DSM 1227 / KCTC 32145 / OM5) (Oligotropha carboxidovorans).